We begin with the raw amino-acid sequence, 245 residues long: Pyridoxine 5'-phosphate synthase (245 aa).

Residue Asn-9 participates in 3-amino-2-oxopropyl phosphate binding. 11-12 (DH) is a binding site for 1-deoxy-D-xylulose 5-phosphate. Arg-20 contributes to the 3-amino-2-oxopropyl phosphate binding site. The active-site Proton acceptor is the His-45. 1-deoxy-D-xylulose 5-phosphate-binding residues include Arg-47 and His-52. The Proton acceptor role is filled by Glu-72. Position 102 (Thr-102) interacts with 1-deoxy-D-xylulose 5-phosphate. The Proton donor role is filled by His-193. Residues Gly-194 and 215 to 216 (GH) contribute to the 3-amino-2-oxopropyl phosphate site.

It belongs to the PNP synthase family. As to quaternary structure, homooctamer; tetramer of dimers.

It localises to the cytoplasm. The enzyme catalyses 3-amino-2-oxopropyl phosphate + 1-deoxy-D-xylulose 5-phosphate = pyridoxine 5'-phosphate + phosphate + 2 H2O + H(+). It participates in cofactor biosynthesis; pyridoxine 5'-phosphate biosynthesis; pyridoxine 5'-phosphate from D-erythrose 4-phosphate: step 5/5. Catalyzes the complicated ring closure reaction between the two acyclic compounds 1-deoxy-D-xylulose-5-phosphate (DXP) and 3-amino-2-oxopropyl phosphate (1-amino-acetone-3-phosphate or AAP) to form pyridoxine 5'-phosphate (PNP) and inorganic phosphate. This is Pyridoxine 5'-phosphate synthase from Shewanella oneidensis (strain ATCC 700550 / JCM 31522 / CIP 106686 / LMG 19005 / NCIMB 14063 / MR-1).